Consider the following 140-residue polypeptide: Lysozyme c-1 (140 aa).

An N-terminal signal peptide occupies residues 1-20; that stretch reads MKVFSTVLLAIVACCAVAEA. A C-type lysozyme domain is found at 21–140; sequence KTFGKCELAK…KKLPNVSSCF (120 aa). Disulfide bonds link C26–C139, C47–C128, C81–C94, and C90–C108. Catalysis depends on residues E52 and D69.

This sequence belongs to the glycosyl hydrolase 22 family. In terms of tissue distribution, expressed in salivary glands and Malpighian tubules.

It carries out the reaction Hydrolysis of (1-&gt;4)-beta-linkages between N-acetylmuramic acid and N-acetyl-D-glucosamine residues in a peptidoglycan and between N-acetyl-D-glucosamine residues in chitodextrins.. Functionally, lysozymes have primarily a bacteriolytic function; those in tissues and body fluids are associated with the monocyte-macrophage system and enhance the activity of immunoagents. This is Lysozyme c-1 from Anopheles gambiae (African malaria mosquito).